A 910-amino-acid polypeptide reads, in one-letter code: Putative coatomer subunit beta'-3 (910 aa).

WD repeat units follow at residues 13–52, 55–94, 97–136, 140–180, 183–224, 227–266, 269–309, 351–393, and 461–501; these read QRSE…MVKS, VTEL…KVKV, AHTD…MCTQ, GHSH…PNFT, GHSK…CVQT, GHAH…LENT, YGLE…ASMD, TCDL…GSAL, and RIDV…SHLD. Acidic residues predominate over residues 865–884; sequence ENGVEESQEDAVEVDVEADG. The tract at residues 865–910 is disordered; that stretch reads ENGVEESQEDAVEVDVEADGSTDGTVLVNGNDTEEQWGTNNEESLA. Over residues 886–910 the composition is skewed to polar residues; the sequence is TDGTVLVNGNDTEEQWGTNNEESLA.

The protein belongs to the WD repeat COPB2 family. As to quaternary structure, oligomeric complex that consists of at least the alpha, beta, beta', gamma, delta, epsilon and zeta subunits.

Its subcellular location is the cytoplasm. The protein localises to the golgi apparatus membrane. The protein resides in the cytoplasmic vesicle. It localises to the COPI-coated vesicle membrane. In terms of biological role, the coatomer is a cytosolic protein complex that binds to dilysine motifs and reversibly associates with Golgi non-clathrin-coated vesicles, which further mediate biosynthetic protein transport from the ER, via the Golgi up to the trans Golgi network. Coatomer complex is required for budding from Golgi membranes, and is essential for the retrograde Golgi-to-ER transport of dilysine-tagged proteins. This Oryza sativa subsp. japonica (Rice) protein is Putative coatomer subunit beta'-3.